The following is a 640-amino-acid chain: Uromodulin (640 aa).

Positions 1–24 (MGQPSLTWMLMVVVASWFITTAAT) are cleaved as a signal peptide. In terms of domain architecture, EGF-like 1 spans 28–64 (EARWCSECHSNATCTEDEAVTTCTCQEGFTGDGLTCV). Cystine bridges form between Cys32–Cys41, Cys35–Cys50, Cys52–Cys63, Cys69–Cys83, Cys77–Cys92, Cys94–Cys106, Cys112–Cys126, Cys120–Cys135, Cys137–Cys148, Cys150–Cys161, Cys155–Cys170, Cys174–Cys267, Cys195–Cys282, Cys217–Cys255, Cys223–Cys287, Cys248–Cys256, Cys297–Cys306, Cys300–Cys315, Cys317–Cys347, Cys335–Cys425, and Cys366–Cys389. Asn38 is a glycosylation site (N-linked (GlcNAc...) asparagine). One can recognise an EGF-like 2; calcium-binding domain in the interval 65–107 (DLDECAIPGAHNCSANSSCVNTPGSFSCVCPEGFRLSPGLGCT). 2 N-linked (GlcNAc...) asparagine glycosylation sites follow: Asn76 and Asn80. The region spanning 108 to 149 (DVDECAEPGLSHCHALATCVNVVGSYLCVCPAGYRGDGWHCE) is the EGF-like 3; calcium-binding domain. The interval 150 to 171 (CSPGSCGPGLDCVPEGDALVCA) is beta hairpin. Residues 172–291 (DPCQAHRTLD…CHLAYCTDPS (120 aa)) are D10C. Asn232 is a glycosylation site (N-linked (GlcNAc...) (complex) asparagine). N-linked (GlcNAc...) (high mannose) asparagine glycosylation is present at Asn275. The EGF-like 4 domain maps to 292–323 (SVEGTCEECSIDEDCKSNNGRWHCQCKQDFNI). The N-linked (GlcNAc...) (complex) asparagine glycan is linked to Asn322. Positions 334–429 (ECGANDMKVS…KINFACSYPL (96 aa)) are ZP-N. Positions 334–589 (ECGANDMKVS…PTCSGTRFRS (256 aa)) constitute a ZP domain. Residue Asn396 is glycosylated (N-linked (GlcNAc...) (complex) asparagine). Residues 430-453 (DMKVSLKTALQPMVSALNIRVGGT) form a flexible ZP-N/ZP-C linker; important for secretion and polymerization into filaments region. Residues 454–465 (GMFTVRMALFQT) are internal hydrophobic patch (IHP). Positions 454-589 (GMFTVRMALF…PTCSGTRFRS (136 aa)) are ZP-C. 3 disulfides stabilise this stretch: Cys506-Cys566, Cys527-Cys582, and Cys571-Cys578. The N-linked (GlcNAc...) (complex) asparagine; alternate glycan is linked to Asn513. N-linked (GlcNAc...) (high mannose) asparagine; alternate glycosylation is present at Asn513. Residues 586-589 (RFRS) are essential for cleavage by HPN. The segment at 598-606 (VLNLGPITR) is external hydrophobic patch (EHP); regulates polymerization into filaments. Ser614 carries the GPI-anchor amidated serine lipid modification. A propeptide spans 615-640 (RAFSSLGLLKVWLPLLLSATLTLTFQ) (removed in mature form).

In terms of assembly, homodimer that then polymerizes into long filaments. The filaments can additionally assemble laterally to form a sheet. The filaments consist of a zigzag-shaped backbone with laterally protruding arms which interact with bacterial adhesin fimH. Two fimH molecules can bind to a single UMOD monomer. N-glycosylated. N-glycan heterogeneity at Asn-232: Hex7HexNAc6 (major) and dHex1Hex7HexNAc6 (minor); at Asn-322: dHex1Hex6HexNAc5 (minor), dHex1Hex7HexNAc6 (major) and dHex1Hex8HexNAc7 (minor); at Asn-396: Hex6HexNAc5 (major), dHex1Hex6HexNAc5 (minor) and Hex7HexNAc6 (minor). Glycosylated Asn-232 interacts with E.coli adhesin fimH. Other complex glycosylation sites may serve as binding sites for proteins from other bacteria inclduding K.pneumoniae, P.aeruginosa and S.mitis. In terms of processing, proteolytically cleaved at a conserved C-terminal proteolytic cleavage site to generate the secreted form found in urine. This cleavage is catalyzed by HPN. As to expression, expressed in the tubular cells of the kidney. Most abundant protein in normal urine (at protein level). Synthesized exclusively in the kidney. Expressed exclusively by epithelial cells of the thick ascending limb of Henle's loop (TALH) and of distal convoluted tubule lumen.

Its subcellular location is the apical cell membrane. It is found in the basolateral cell membrane. The protein localises to the cell projection. The protein resides in the cilium membrane. It localises to the secreted. In terms of biological role, functions in biogenesis and organization of the apical membrane of epithelial cells of the thick ascending limb of Henle's loop (TALH), where it promotes formation of complex filamentous gel-like structure that may play a role in the water barrier permeability. May serve as a receptor for binding and endocytosis of cytokines (IL-1, IL-2) and TNF. Facilitates neutrophil migration across renal epithelia. Functionally, in the urine, may contribute to colloid osmotic pressure, retards passage of positively charged electrolytes, and inhibits formation of liquid containing supersaturated salts and subsequent formation of salt crystals. Protects against urinary tract infections by binding to type 1 fimbriated E.coli. Binds to bacterial adhesin fimH which mediates the stable formation of bacterial aggregates, prevents the binding of E.coli to uroplakins UPK1A and UPK1B which act as urothelial receptors for type I fimbriae, and allows for pathogen clearance through micturation. Also promotes aggregation of other bacteria including K.pneumoniae, P.aeruginosa and S.mitis and so may also protect against other uropathogens. This is Uromodulin (UMOD) from Homo sapiens (Human).